A 207-amino-acid polypeptide reads, in one-letter code: BON1-associated protein 2 (207 aa).

One can recognise a C2 domain in the interval M1–F112.

As to quaternary structure, interacts with BON1, BON2 and BON3. In terms of tissue distribution, expressed in roots, leaves, stems and flowers.

The protein resides in the membrane. Its function is as follows. Negative regulator of cell death and defense responses. Exhibits calcium-dependent phospholipid binding properties. This chain is BON1-associated protein 2 (BAP2), found in Arabidopsis thaliana (Mouse-ear cress).